The following is a 212-amino-acid chain: Troponin I, cardiac muscle (212 aa).

Polar residues predominate over residues 1–11 (MADRSGGSTAG). Residues 1–45 (MADRSGGSTAGDTVPAPPPVRRRSSANYRAYATEPHAKKKSKISA) form a disordered region. Alanine 2 carries the post-translational modification N-acetylalanine. The residue at position 5 (serine 5) is a Phosphoserine. A phosphoserine; by PKA and PKD/PRKD1 mark is found at serine 24 and serine 25. Tyrosine 28 bears the Phosphotyrosine mark. Threonine 33 carries the phosphothreonine; by STK4/MST1 modification. The interval 34–81 (EPHAKKKSKISASRKLQLKTLMLQIAKQELEREAEERRGEKGRALSTR) is involved in binding TNC. Phosphoserine; by PKC/PRKCE is present on residues serine 44 and serine 46. Threonine 53 is subject to Phosphothreonine; by STK4/MST1. Phosphoserine is present on serine 79. Threonine 80 is modified (phosphothreonine). An involved in binding TNC and actin region spans residues 131-151 (NQKIFDLRGKFKRPTLRRVRI). Residue threonine 145 is modified to Phosphothreonine; by STK4/MST1. Phosphoserine; by PAK3 is present on serine 152. Position 183 is a phosphothreonine (threonine 183). Serine 201 carries the post-translational modification Phosphoserine.

It belongs to the troponin I family. Interacts with TRIM63. Binds to actin and tropomyosin. Interacts with STK4/MST1. Post-translationally, phosphorylated at Ser-24 and Ser-25 by PRKD1; phosphorylation reduces myofilament calcium sensitivity. Phosphorylated preferentially at Thr-33. Phosphorylation by STK4/MST1 alters its binding affinity to TNNC1 (cardiac Tn-C) and TNNT2 (cardiac Tn-T). Phosphorylated at Ser-44 and Ser-46 by PRKCE; phosphorylation increases myocardium contractile dysfunction.

In terms of biological role, troponin I is the inhibitory subunit of troponin, the thin filament regulatory complex which confers calcium-sensitivity to striated muscle actomyosin ATPase activity. The protein is Troponin I, cardiac muscle (TNNI3) of Bos taurus (Bovine).